Reading from the N-terminus, the 633-residue chain is Probable potassium transport system protein Kup 2 (633 aa).

12 helical membrane-spanning segments follow: residues 18 to 38 (FLAL…TSPL), 61 to 81 (LVSL…VLFL), 107 to 127 (PVLM…DAMI), 143 to 163 (VAPA…LLLF), 173 to 193 (VSVF…AAGV), 211 to 231 (AIGF…AIFL), 255 to 275 (WFAV…ALVL), 287 to 307 (LMFP…ATII), 345 to 365 (IYLP…MLMF), 371 to 391 (LAPA…ILAF), 402 to 422 (ALTA…FLGA), and 427 to 447 (VHHG…MMWT).

Belongs to the HAK/KUP transporter (TC 2.A.72) family.

The protein localises to the cell inner membrane. It carries out the reaction K(+)(in) + H(+)(in) = K(+)(out) + H(+)(out). Transport of potassium into the cell. Likely operates as a K(+):H(+) symporter. The polypeptide is Probable potassium transport system protein Kup 2 (Rhizobium meliloti (strain 1021) (Ensifer meliloti)).